The sequence spans 62 residues: Negative regulatory protein YxlE (62 aa).

The next 2 helical transmembrane spans lie at 7–27 and 37–57; these read MILP…ISCI and WMWA…FFTV.

Its subcellular location is the cell membrane. Its function is as follows. Together with YxlD is important for negative regulation of sigma Y activity. The protein is Negative regulatory protein YxlE (yxlE) of Bacillus subtilis (strain 168).